The chain runs to 284 residues: Pantothenate synthetase (284 aa).

Position 30 to 37 (30 to 37) interacts with ATP; the sequence is MGNLHDGH. Histidine 37 serves as the catalytic Proton donor. Residue glutamine 61 coordinates (R)-pantoate. Glutamine 61 contributes to the beta-alanine binding site. ATP is bound at residue 149 to 152; it reads GEKD. Glutamine 155 lines the (R)-pantoate pocket. ATP is bound by residues isoleucine 178 and 186-189; that span reads LSSR.

This sequence belongs to the pantothenate synthetase family. In terms of assembly, homodimer.

It is found in the cytoplasm. It catalyses the reaction (R)-pantoate + beta-alanine + ATP = (R)-pantothenate + AMP + diphosphate + H(+). The protein operates within cofactor biosynthesis; (R)-pantothenate biosynthesis; (R)-pantothenate from (R)-pantoate and beta-alanine: step 1/1. Catalyzes the condensation of pantoate with beta-alanine in an ATP-dependent reaction via a pantoyl-adenylate intermediate. The sequence is that of Pantothenate synthetase from Salmonella newport (strain SL254).